Reading from the N-terminus, the 601-residue chain is Kelch repeat and BTB domain-containing protein 8 (601 aa).

The interval 1–25 is disordered; that stretch reads MAASADLSKSSPTPNGIPSSDPASD. A compositionally biased stretch (polar residues) spans 7–22; sequence LSKSSPTPNGIPSSDP. A BTB domain is found at 49 to 117; it reads TDIVVEVDHG…AYTSRVILTE (69 aa). Residues 153-252 form the BACK domain; sequence IGVFIFADHY…PLMEDTFIEK (100 aa). 5 Kelch repeats span residues 336 to 390, 391 to 441, 443 to 481, 483 to 532, and 542 to 588; these read DIYI…YCCG, KMYA…EYKE, IYVL…VYKD, IYYI…LFQN, and QVTV…FECA.

Belongs to the KBTBD8 family. Component of the BCR(KBTBD8) E3 ubiquitin ligase complex, at least composed of CUL3, KBTBD8 and RBX1.

The protein resides in the cytoplasm. The protein localises to the cytoskeleton. It is found in the spindle. Its subcellular location is the golgi apparatus. Functionally, substrate-specific adapter of a BCR (BTB-CUL3-RBX1) E3 ubiquitin ligase complex that acts as a regulator of neural crest specification. The BCR(KBTBD8) complex acts by mediating monoubiquitination of NOLC1 and TCOF1: monoubiquitination promotes the formation of a NOLC1-TCOF1 complex that acts as a platform to connect RNA polymerase I with enzymes responsible for ribosomal processing and modification, leading to remodel the translational program of differentiating cells in favor of neural crest specification. The sequence is that of Kelch repeat and BTB domain-containing protein 8 (KBTBD8) from Homo sapiens (Human).